Reading from the N-terminus, the 205-residue chain is Glycerol-3-phosphate acyltransferase (205 aa).

The next 6 helical transmembrane spans lie at 7–27 (MTAL…VWVC), 54–74 (VVPA…VLWV), 80–100 (LPIW…SYPL), 116–136 (VLLM…ALLA), 141–161 (TAAV…YWLA), and 163–183 (EATL…AWNI).

The protein belongs to the PlsY family. As to quaternary structure, probably interacts with PlsX.

It is found in the cell inner membrane. The enzyme catalyses an acyl phosphate + sn-glycerol 3-phosphate = a 1-acyl-sn-glycero-3-phosphate + phosphate. Its pathway is lipid metabolism; phospholipid metabolism. Catalyzes the transfer of an acyl group from acyl-phosphate (acyl-PO(4)) to glycerol-3-phosphate (G3P) to form lysophosphatidic acid (LPA). This enzyme utilizes acyl-phosphate as fatty acyl donor, but not acyl-CoA or acyl-ACP. The chain is Glycerol-3-phosphate acyltransferase from Chromohalobacter salexigens (strain ATCC BAA-138 / DSM 3043 / CIP 106854 / NCIMB 13768 / 1H11).